Here is a 212-residue protein sequence, read N- to C-terminus: MQTVAVIDYGMGNLHSVAKALEHVGAGKVLVTSDASVIREADRVVFPGVGAIRDCMAEIRRLGFDSLVREVSQDRPFLGICVGMQALLEHSEENAGVDCIGLFPGQVRFFGKDLQEEGEHLKVPHMGWNEVSQTIDHPLWHDIPDRARFYFVHSYYINAGKPGQVVGRGHYGVDFAAALADGSRFAVQFHPEKSHTHGLQLLQNFIAWDGRW.

Positions 3–212 (TVAVIDYGMG…QNFIAWDGRW (210 aa)) constitute a Glutamine amidotransferase type-1 domain. Cys-81 functions as the Nucleophile in the catalytic mechanism. Catalysis depends on residues His-190 and Glu-192.

As to quaternary structure, heterodimer of HisH and HisF.

Its subcellular location is the cytoplasm. The catalysed reaction is 5-[(5-phospho-1-deoxy-D-ribulos-1-ylimino)methylamino]-1-(5-phospho-beta-D-ribosyl)imidazole-4-carboxamide + L-glutamine = D-erythro-1-(imidazol-4-yl)glycerol 3-phosphate + 5-amino-1-(5-phospho-beta-D-ribosyl)imidazole-4-carboxamide + L-glutamate + H(+). It catalyses the reaction L-glutamine + H2O = L-glutamate + NH4(+). Its pathway is amino-acid biosynthesis; L-histidine biosynthesis; L-histidine from 5-phospho-alpha-D-ribose 1-diphosphate: step 5/9. Its function is as follows. IGPS catalyzes the conversion of PRFAR and glutamine to IGP, AICAR and glutamate. The HisH subunit catalyzes the hydrolysis of glutamine to glutamate and ammonia as part of the synthesis of IGP and AICAR. The resulting ammonia molecule is channeled to the active site of HisF. The polypeptide is Imidazole glycerol phosphate synthase subunit HisH (Pseudomonas putida (strain ATCC 47054 / DSM 6125 / CFBP 8728 / NCIMB 11950 / KT2440)).